We begin with the raw amino-acid sequence, 287 residues long: CBK1 kinase activator protein MOB2 (287 aa).

Positions 1–89 (MSFFNFKAFG…QQQEASERSE (89 aa)) are disordered. At Y33 the chain carries Phosphotyrosine. Over residues 34–44 (SSPHSSNSRLS) the composition is skewed to low complexity. The segment covering 45–56 (LRNKHHSPKRHS) has biased composition (basic residues). The residue at position 59 (S59) is a Phosphoserine. Over residues 63–83 (QKSTPQSQQLTSTTPQSQQQE) the composition is skewed to low complexity. Residue T76 is modified to Phosphothreonine.

Belongs to the MOB1/phocein family. In terms of assembly, interacts with protein kinase CBK1 to form the RAM CBK1-MOB2 kinase complex.

It localises to the nucleus. The protein resides in the cytoplasm. Functions as an activator subunit for the CBK1 protein kinase. Part of the regulation of ACE2 activity and cellular morphogenesis (RAM) signaling network. Required for coordinating polarized cell growth during interphase with the onset of mitosis. Required for mother/daughter cell separation after cytokinesis. Also has a role in the prevention of nuclear export of ACE2 from the daughter cell nucleus after mitotic exit. It coordinates ACE2-dependent transcription with mitotic exit network activation. The chain is CBK1 kinase activator protein MOB2 (MOB2) from Saccharomyces cerevisiae (strain ATCC 204508 / S288c) (Baker's yeast).